Reading from the N-terminus, the 504-residue chain is Cytochrome P450 3A2 (504 aa).

Cys-443 lines the heme pocket.

The protein belongs to the cytochrome P450 family. The cofactor is heme. Expressed in liver.

Its subcellular location is the endoplasmic reticulum membrane. The protein localises to the microsome membrane. The catalysed reaction is an organic molecule + reduced [NADPH--hemoprotein reductase] + O2 = an alcohol + oxidized [NADPH--hemoprotein reductase] + H2O + H(+). Its function is as follows. Cytochromes P450 are a group of heme-thiolate monooxygenases. In liver microsomes, this enzyme is involved in an NADPH-dependent electron transport pathway. It oxidizes a variety of structurally unrelated compounds, including steroids, fatty acids, and xenobiotics. The protein is Cytochrome P450 3A2 (Cyp3a2) of Rattus norvegicus (Rat).